Here is a 323-residue protein sequence, read N- to C-terminus: UPF0065 protein BP0148 (323 aa).

The first 24 residues, 1 to 24, serve as a signal peptide directing secretion; the sequence is MKPFSLLRRIATIALLMAASSAHA.

This sequence belongs to the UPF0065 (bug) family.

It localises to the periplasm. The chain is UPF0065 protein BP0148 from Bordetella pertussis (strain Tohama I / ATCC BAA-589 / NCTC 13251).